Consider the following 246-residue polypeptide: Ribonuclease 3 (246 aa).

The region spanning 30-152 (ISWIEKNLGH…MIGAIFLESG (123 aa)) is the RNase III domain. Glu65 lines the Mg(2+) pocket. The active site involves Asp69. Mg(2+) is bound by residues Asp138 and Glu141. Glu141 is a catalytic residue. The DRBM domain maps to 177–246 (HPKSALQEWA…AQALLDILAQ (70 aa)).

The protein belongs to the ribonuclease III family. As to quaternary structure, homodimer. Requires Mg(2+) as cofactor.

It is found in the cytoplasm. The enzyme catalyses Endonucleolytic cleavage to 5'-phosphomonoester.. Its function is as follows. Digests double-stranded RNA. Involved in the processing of primary rRNA transcript to yield the immediate precursors to the large and small rRNAs (23S and 16S). Processes some mRNAs, and tRNAs when they are encoded in the rRNA operon. Processes pre-crRNA and tracrRNA of type II CRISPR loci if present in the organism. The chain is Ribonuclease 3 from Zymomonas mobilis subsp. mobilis (strain ATCC 31821 / ZM4 / CP4).